The sequence spans 259 residues: ATP synthase subunit b 3 (259 aa).

The helical transmembrane segment at 5-27 (WWTLGLQAINVLILIWILSRFLF) threads the bilayer.

It belongs to the ATPase B chain family. F-type ATPases have 2 components, F(1) - the catalytic core - and F(0) - the membrane proton channel. F(1) has five subunits: alpha(3), beta(3), gamma(1), delta(1), epsilon(1). F(0) has three main subunits: a(1), b(2) and c(10-14). The alpha and beta chains form an alternating ring which encloses part of the gamma chain. F(1) is attached to F(0) by a central stalk formed by the gamma and epsilon chains, while a peripheral stalk is formed by the delta and b chains.

Its subcellular location is the cell inner membrane. Functionally, f(1)F(0) ATP synthase produces ATP from ADP in the presence of a proton or sodium gradient. F-type ATPases consist of two structural domains, F(1) containing the extramembraneous catalytic core and F(0) containing the membrane proton channel, linked together by a central stalk and a peripheral stalk. During catalysis, ATP synthesis in the catalytic domain of F(1) is coupled via a rotary mechanism of the central stalk subunits to proton translocation. Component of the F(0) channel, it forms part of the peripheral stalk, linking F(1) to F(0). The chain is ATP synthase subunit b 3 from Beijerinckia indica subsp. indica (strain ATCC 9039 / DSM 1715 / NCIMB 8712).